A 449-amino-acid chain; its full sequence is Probable multidrug resistance protein NorM (449 aa).

The next 12 membrane-spanning stretches (helical) occupy residues 17–39 (LMWP…TIMA), 54–76 (VGLW…PLVA), 97–119 (VAVS…LPIL), 129–151 (AGLF…ALRG), 164–186 (VISL…GIGP), 196–215 (GFAT…SYIY), 243–265 (LGLP…AIVL), 280–302 (MSVT…IRVG), 315–337 (LVQK…LIWF), 352–369 (VFDI…YQLM), 390–412 (MWIT…ARVA), and 417–439 (AGVW…MRLY).

This sequence belongs to the multi antimicrobial extrusion (MATE) (TC 2.A.66.1) family.

The protein localises to the cell inner membrane. Functionally, multidrug efflux pump. The protein is Probable multidrug resistance protein NorM (norM) of Acinetobacter baylyi (strain ATCC 33305 / BD413 / ADP1).